Reading from the N-terminus, the 569-residue chain is MLGTLGLWALLPAAVQAPPNRRTCVFFEAPGVRGSTKTLGELLDAGPGPPRVIRCLYSRCCFGIWNLTRDQAQVEMQGCRDSDEPGCESLSCDPSPRARASSGSTLFTCSCGADFCNANYSHLPPLGGPGTPGPQGPQAAPGESPWMALALLGLVLLLLLLLGGIVVALLQRKAYRVQSGPEPEPDSGRDCSEELPELPQLCFSQVIREGGHAAVWAGQLQGELVAIKVFPRRAVAQFRAERALYELPGLQHNHVVRFIAAGQGGPGPLPSGPLLVLELHPKGSLCQYLSQHTSDWGSSLRMALSLAQGLAFLHEERWQDGQYKPGIAHRDLSSQNVLIREDGSCAIGDLGLALVLPGFAQPRAWAPPQPRGPAAIMEAGTQRYMAPELLDKSLDLQDWGTALRRADVYSLALLLWEILSRCPDLRPDGRPPPFQLAYEAELGSAPTTCELWALAVEERRRPDIPSSWCCFATDPGGLRELLEDCWDADPEARLTAECVQQRLVALVHPQEAQPCPEGRPHSHPEDWPPAPAPAPALLPGSPQPGACHFGVQQGLCSRNPGAACASSDV.

Positions methionine 1–alanine 17 are cleaved as a signal peptide. Residues proline 18 to alanine 148 are Extracellular-facing. Disulfide bonds link cysteine 55-cysteine 79 and cysteine 92-cysteine 109. Asparagine 66 carries an N-linked (GlcNAc...) asparagine glycan. Residue asparagine 119 is glycosylated (N-linked (GlcNAc...) asparagine). A helical membrane pass occupies residues leucine 149–leucine 169. At leucine 170–valine 569 the chain is on the cytoplasmic side. Residues leucine 201–glutamate 511 enclose the Protein kinase domain. Residues isoleucine 207 to valine 215 and lysine 228 contribute to the ATP site. Aspartate 331 serves as the catalytic Proton acceptor. Positions alanine 512 to proline 535 are disordered.

It belongs to the protein kinase superfamily. TKL Ser/Thr protein kinase family. TGFB receptor subfamily. As to quaternary structure, interacts with type I receptor ACVR1. It depends on Mg(2+) as a cofactor. The cofactor is Mn(2+).

The protein resides in the membrane. It catalyses the reaction L-threonyl-[receptor-protein] + ATP = O-phospho-L-threonyl-[receptor-protein] + ADP + H(+). It carries out the reaction L-seryl-[receptor-protein] + ATP = O-phospho-L-seryl-[receptor-protein] + ADP + H(+). In terms of biological role, on ligand binding, forms a receptor complex consisting of two type II and two type I transmembrane serine/threonine kinases. Type II receptors phosphorylate and activate type I receptors which autophosphorylate, then bind and activate SMAD transcriptional regulators. Receptor for anti-Muellerian hormone. This is Anti-Muellerian hormone type-2 receptor (AMHR2) from Oryctolagus cuniculus (Rabbit).